A 368-amino-acid polypeptide reads, in one-letter code: D-alanine--D-alanine ligase (368 aa).

The ATP-grasp domain maps to 141-350 (KMIWDYSGLP…YNELIMHLIE (210 aa)). ATP is bound at residue 176–231 (EKDLEYPLFIKPCRAGSSVGAGMVKNRNELLEQAEESFLWDNKILVEACIEAREVE). Mg(2+) is bound by residues D303, E317, and N319.

The protein belongs to the D-alanine--D-alanine ligase family. The cofactor is Mg(2+). It depends on Mn(2+) as a cofactor.

The protein resides in the cytoplasm. The enzyme catalyses 2 D-alanine + ATP = D-alanyl-D-alanine + ADP + phosphate + H(+). It functions in the pathway cell wall biogenesis; peptidoglycan biosynthesis. Functionally, cell wall formation. The polypeptide is D-alanine--D-alanine ligase (Treponema denticola (strain ATCC 35405 / DSM 14222 / CIP 103919 / JCM 8153 / KCTC 15104)).